A 220-amino-acid polypeptide reads, in one-letter code: MATRRLMLLGAPGAGKGTQAQLLMQELGLPQVSTGDILRAAVKEGTPLGLEAQSYMNRGALVPDAVVVGLIEDRLARPDAGGGWILDGFPRTPAQAEALDGLLAHLAQSLEAVVLIDVPEAQLIERLTGRRTCPLCKRIFHVRFNPPPAAPPFCTDHTDCPSELVQRPDDTLEVVSKRLNVYRESTEPLIRYYQEQQKLTSVDGDRSPEVVYSELRELLG.

Position 13-18 (13-18) interacts with ATP; that stretch reads GAGKGT. Residues 33–62 form an NMP region; that stretch reads STGDILRAAVKEGTPLGLEAQSYMNRGALV. AMP contacts are provided by residues T34, R39, 60–62, 88–91, and Q95; these read ALV and GFPR. The interval 129–170 is LID; that stretch reads GRRTCPLCKRIFHVRFNPPPAAPPFCTDHTDCPSELVQRPDD. Position 130 (R130) interacts with ATP. Zn(2+)-binding residues include C133 and C136. 139-140 serves as a coordination point for ATP; sequence IF. The Zn(2+) site is built by D156 and C160. Residues R167 and R178 each coordinate AMP. R206 lines the ATP pocket.

This sequence belongs to the adenylate kinase family. Monomer.

It localises to the cytoplasm. The enzyme catalyses AMP + ATP = 2 ADP. The protein operates within purine metabolism; AMP biosynthesis via salvage pathway; AMP from ADP: step 1/1. Its function is as follows. Catalyzes the reversible transfer of the terminal phosphate group between ATP and AMP. Plays an important role in cellular energy homeostasis and in adenine nucleotide metabolism. The polypeptide is Adenylate kinase (Gloeobacter violaceus (strain ATCC 29082 / PCC 7421)).